We begin with the raw amino-acid sequence, 215 residues long: Pyrrolidone-carboxylate peptidase (215 aa).

Residues glutamate 80, cysteine 143, and histidine 167 contribute to the active site.

It belongs to the peptidase C15 family. As to quaternary structure, homotetramer.

Its subcellular location is the cytoplasm. It catalyses the reaction Release of an N-terminal pyroglutamyl group from a polypeptide, the second amino acid generally not being Pro.. Its function is as follows. Removes 5-oxoproline from various penultimate amino acid residues except L-proline. This is Pyrrolidone-carboxylate peptidase from Bacillus thuringiensis (strain Al Hakam).